The chain runs to 85 residues: Protein AC4 (85 aa).

Residue G2 is the site of N-myristoyl glycine; by host attachment. Positions 44 to 63 are disordered; that stretch reads RAPMSNPTSRKTGTVSNGDC. A compositionally biased stretch (polar residues) spans 46–62; it reads PMSNPTSRKTGTVSNGD.

Belongs to the geminiviridae protein AC4/C4 family.

It localises to the host cell membrane. Pathogenicity determinant. May act as a suppressor of RNA-mediated gene silencing, also known as post-transcriptional gene silencing (PTGS), a mechanism of plant viral defense that limits the accumulation of viral RNAs. This is Protein AC4 from Potato yellow mosaic virus (isolate Venezuela) (PYMV).